A 457-amino-acid polypeptide reads, in one-letter code: MSALRRSGYGPSDGPSYGRYYGPGGGDVPVHPPPPLYPLRPEPPQPPISWRVRGGGPAETTWLGEGGGGDGYYPSGGAWPEPGRAGGSHQEQPPYPSYNSNYWNSTARSRAPYPSTYPVRPELQGQSLNSYTNGAYGPTYPPGPGANTASYSGAYYAPGYTQTSYSTEVPSTYRSSGNSPTPVSRWIYPQQDCQTEAPPLRGQVPGYPPSQNPGMTLPHYPYGDGNRSVPQSGPTVRPQEDAWASPGAYGMGGRYPWPSSAPSAPPGNLYMTESTSPWPSSGSPQSPPSPPVQQPKDSSYPYSQSDQSMNRHNFPCSVHQYESSGTVNNDDSDLLDSQVQYSAEPQLYGNATSDHPNNQDQSSSLPEECVPSDESTPPSIKKIIHVLEKVQYLEQEVEEFVGKKTDKAYWLLEEMLTKELLELDSVETGGQDSVRQARKEAVCKIQAILEKLEKKGL.

Residues 1–101 (MSALRRSGYG…QPPYPSYNSN (101 aa)) form a disordered region. Ser7 is subject to Phosphoserine. Residues 8–20 (GYGPSDGPSYGRY) show a composition bias toward low complexity. A compositionally biased stretch (pro residues) spans 30–47 (VHPPPPLYPLRPEPPQPP). Arg40, Arg53, and Arg108 each carry omega-N-methylarginine. 3 disordered regions span residues 113 to 136 (YPST…NGAY), 166 to 333 (STEV…DDSD), and 347 to 377 (LYGN…ESTP). Residues 166–182 (STEVPSTYRSSGNSPTP) show a composition bias toward polar residues. The residue at position 185 (Arg185) is an Omega-N-methylarginine. 2 stretches are compositionally biased toward low complexity: residues 274 to 284 (STSPWPSSGSP) and 294 to 308 (QPKD…SDQS). Polar residues-rich tracts occupy residues 320-333 (QYES…DDSD) and 347-365 (LYGN…SSSL). The 78-residue stretch at 379-456 (SIKKIIHVLE…AILEKLEKKG (78 aa)) folds into the BAG domain.

As to quaternary structure, binds to the ATPase domain of HSP/HSC70 chaperones. Binds to the death domain of TNFRSF1A in the absence of TNF and thereby prevents binding of adapter molecules such as TRADD or TRAF2. Binds to the death domain of TNFRSF12. Interacts with PRKN. Ubiquitous.

The protein resides in the cytoplasm. Functionally, inhibits the chaperone activity of HSP70/HSC70 by promoting substrate release. Prevents constitutive TNFRSF1A signaling. Negative regulator of PRKN translocation to damaged mitochondria. This chain is BAG family molecular chaperone regulator 4 (BAG4), found in Homo sapiens (Human).